A 430-amino-acid polypeptide reads, in one-letter code: Glutamate-1-semialdehyde 2,1-aminomutase 2 (430 aa).

Lys-268 bears the N6-(pyridoxal phosphate)lysine mark.

It belongs to the class-III pyridoxal-phosphate-dependent aminotransferase family. HemL subfamily. In terms of assembly, homodimer. Pyridoxal 5'-phosphate is required as a cofactor.

The protein localises to the cytoplasm. The catalysed reaction is (S)-4-amino-5-oxopentanoate = 5-aminolevulinate. It participates in porphyrin-containing compound metabolism; protoporphyrin-IX biosynthesis; 5-aminolevulinate from L-glutamyl-tRNA(Glu): step 2/2. In Shouchella clausii (strain KSM-K16) (Alkalihalobacillus clausii), this protein is Glutamate-1-semialdehyde 2,1-aminomutase 2.